The primary structure comprises 433 residues: Probable D-serine dehydratase (433 aa).

At K110 the chain carries N6-(pyridoxal phosphate)lysine.

Belongs to the serine/threonine dehydratase family. DsdA subfamily. It depends on pyridoxal 5'-phosphate as a cofactor.

It carries out the reaction D-serine = pyruvate + NH4(+). In Oenococcus oeni (strain ATCC BAA-331 / PSU-1), this protein is Probable D-serine dehydratase.